Consider the following 152-residue polypeptide: Ribosomal RNA large subunit methyltransferase H (152 aa).

Residues L70, G101, and 120–125 (LSDLTF) each bind S-adenosyl-L-methionine.

Belongs to the RNA methyltransferase RlmH family. In terms of assembly, homodimer.

It is found in the cytoplasm. It carries out the reaction pseudouridine(1915) in 23S rRNA + S-adenosyl-L-methionine = N(3)-methylpseudouridine(1915) in 23S rRNA + S-adenosyl-L-homocysteine + H(+). Functionally, specifically methylates the pseudouridine at position 1915 (m3Psi1915) in 23S rRNA. The polypeptide is Ribosomal RNA large subunit methyltransferase H (Pseudothermotoga lettingae (strain ATCC BAA-301 / DSM 14385 / NBRC 107922 / TMO) (Thermotoga lettingae)).